We begin with the raw amino-acid sequence, 475 residues long: MNTVLAQQIANEGGVEAWMIAQQHKSLLRFLTCGSVDDGKSTLIGRLLHDTRQIYEDQLSSLHNDSKRHGTQGEKLDLALLVDGLQAEREQGITIDVAYRYFSTEKRKFIIADTPGHEQYTRNMATGASTCELAILLIDARKGVLDQTRRHSFISTLLGIKHLVVAINKMDLVDYSEETFTRIREDYLTFAGQLPGNLDIRFVPLSALEGDNVASQSESMPWYSGLTLLEVLETVEIQRVVNAQPMRFPVQYVNRPNLDFRGYAGMLASGRVEVGQRVKVLPSGVESNVARIVTFDGDREEVFAGEAITLVLTDEIDISRGDLLLAADEALPAVQSASVDVVWMAEQPLSPGQSYDIKIAGKKTRARVDGIRYQVDINNLTQREVENLPLNGIGLVDLTFDEPLVLDRYQQNPVTGGLIFIDRLSNVTVGAGMVHEPVSQATAASSEFSAFELELNALVRRHFPHWGARDLLGDK.

The tr-type G domain maps to K25–R239. The G1 stretch occupies residues G34–S41. Residue G34 to S41 participates in GTP binding. The segment at G92–D96 is G2. The segment at D113–G116 is G3. GTP-binding positions include D113–H117 and N168–D171. The interval N168–D171 is G4. Residues S206–L208 are G5.

It belongs to the TRAFAC class translation factor GTPase superfamily. Classic translation factor GTPase family. CysN/NodQ subfamily. As to quaternary structure, heterodimer composed of CysD, the smaller subunit, and CysN.

It carries out the reaction sulfate + ATP + H(+) = adenosine 5'-phosphosulfate + diphosphate. It functions in the pathway sulfur metabolism; hydrogen sulfide biosynthesis; sulfite from sulfate: step 1/3. Functionally, with CysD forms the ATP sulfurylase (ATPS) that catalyzes the adenylation of sulfate producing adenosine 5'-phosphosulfate (APS) and diphosphate, the first enzymatic step in sulfur assimilation pathway. APS synthesis involves the formation of a high-energy phosphoric-sulfuric acid anhydride bond driven by GTP hydrolysis by CysN coupled to ATP hydrolysis by CysD. The polypeptide is Sulfate adenylyltransferase subunit 1 (Shigella flexneri serotype 5b (strain 8401)).